The primary structure comprises 398 residues: S-adenosylmethionine decarboxylase proenzyme (398 aa).

Residues Glu18 and Glu21 contribute to the active site. The Schiff-base intermediate with substrate; via pyruvic acid role is filled by Ser78. Ser78 carries the post-translational modification Pyruvic acid (Ser); by autocatalysis. The active-site Proton donor; for catalytic activity is Cys92. Catalysis depends on proton acceptor; for processing activity residues Ser243 and His256.

This sequence belongs to the eukaryotic AdoMetDC family. Requires pyruvate as cofactor. In terms of processing, is synthesized initially as an inactive proenzyme. Formation of the active enzyme involves a self-maturation process in which the active site pyruvoyl group is generated from an internal serine residue via an autocatalytic post-translational modification. Two non-identical subunits are generated from the proenzyme in this reaction, and the pyruvate is formed at the N-terminus of the alpha chain, which is derived from the carboxyl end of the proenzyme. The post-translation cleavage follows an unusual pathway, termed non-hydrolytic serinolysis, in which the side chain hydroxyl group of the serine supplies its oxygen atom to form the C-terminus of the beta chain, while the remainder of the serine residue undergoes an oxidative deamination to produce ammonia and the pyruvoyl group blocking the N-terminus of the alpha chain.

It catalyses the reaction S-adenosyl-L-methionine + H(+) = S-adenosyl 3-(methylsulfanyl)propylamine + CO2. It participates in amine and polyamine biosynthesis; S-adenosylmethioninamine biosynthesis; S-adenosylmethioninamine from S-adenosyl-L-methionine: step 1/1. This Oryza sativa subsp. indica (Rice) protein is S-adenosylmethionine decarboxylase proenzyme (SAMDC).